A 158-amino-acid polypeptide reads, in one-letter code: Pleckstrin homology domain-containing family J member 1 (158 aa).

The PH domain maps to proline 15 to tyrosine 108.

The polypeptide is Pleckstrin homology domain-containing family J member 1 (plekhj1) (Danio rerio (Zebrafish)).